Here is a 264-residue protein sequence, read N- to C-terminus: Energy-coupling factor transporter ATP-binding protein EcfA1 (264 aa).

An ABC transporter domain is found at 2 to 234; that stretch reads IQVENLSFSY…DEFNPFLIKI (233 aa). 34 to 41 provides a ligand contact to ATP; it reads GKNGSGKS.

Belongs to the ABC transporter superfamily. Energy-coupling factor EcfA family. As to quaternary structure, forms a stable energy-coupling factor (ECF) transporter complex composed of 2 membrane-embedded substrate-binding proteins (S component), 2 ATP-binding proteins (A component) and 2 transmembrane proteins (T component).

The protein localises to the cell inner membrane. Its function is as follows. ATP-binding (A) component of a common energy-coupling factor (ECF) ABC-transporter complex. Unlike classic ABC transporters this ECF transporter provides the energy necessary to transport a number of different substrates. The sequence is that of Energy-coupling factor transporter ATP-binding protein EcfA1 from Fusobacterium nucleatum subsp. nucleatum (strain ATCC 25586 / DSM 15643 / BCRC 10681 / CIP 101130 / JCM 8532 / KCTC 2640 / LMG 13131 / VPI 4355).